The chain runs to 178 residues: Large ribosomal subunit protein uL6 (178 aa).

Belongs to the universal ribosomal protein uL6 family. Part of the 50S ribosomal subunit.

This protein binds to the 23S rRNA, and is important in its secondary structure. It is located near the subunit interface in the base of the L7/L12 stalk, and near the tRNA binding site of the peptidyltransferase center. The sequence is that of Large ribosomal subunit protein uL6 from Campylobacter hominis (strain ATCC BAA-381 / DSM 21671 / CCUG 45161 / LMG 19568 / NCTC 13146 / CH001A).